The primary structure comprises 252 residues: Pyridoxine 5'-phosphate synthase (252 aa).

Residues Asn8 and Arg19 each contribute to the 3-amino-2-oxopropyl phosphate site. The Proton acceptor role is filled by His44. 2 residues coordinate 1-deoxy-D-xylulose 5-phosphate: Arg46 and His51. Glu75 acts as the Proton acceptor in catalysis. Thr110 provides a ligand contact to 1-deoxy-D-xylulose 5-phosphate. Catalysis depends on His201, which acts as the Proton donor. 3-amino-2-oxopropyl phosphate is bound by residues Asp202 and 224–225 (GH).

This sequence belongs to the PNP synthase family. Homooctamer; tetramer of dimers.

The protein localises to the cytoplasm. The catalysed reaction is 3-amino-2-oxopropyl phosphate + 1-deoxy-D-xylulose 5-phosphate = pyridoxine 5'-phosphate + phosphate + 2 H2O + H(+). It participates in cofactor biosynthesis; pyridoxine 5'-phosphate biosynthesis; pyridoxine 5'-phosphate from D-erythrose 4-phosphate: step 5/5. In terms of biological role, catalyzes the complicated ring closure reaction between the two acyclic compounds 1-deoxy-D-xylulose-5-phosphate (DXP) and 3-amino-2-oxopropyl phosphate (1-amino-acetone-3-phosphate or AAP) to form pyridoxine 5'-phosphate (PNP) and inorganic phosphate. This Albidiferax ferrireducens (strain ATCC BAA-621 / DSM 15236 / T118) (Rhodoferax ferrireducens) protein is Pyridoxine 5'-phosphate synthase.